The chain runs to 109 residues: Thioredoxin-like protein slr1139 (109 aa).

Residues 2 to 107 (SLLEITDAEF…LLELLKEELD (106 aa)) enclose the Thioredoxin domain. C31 and C34 are oxidised to a cystine.

Belongs to the thioredoxin family.

This Synechocystis sp. (strain ATCC 27184 / PCC 6803 / Kazusa) protein is Thioredoxin-like protein slr1139.